A 189-amino-acid chain; its full sequence is GTP cyclohydrolase 1 (189 aa).

3 residues coordinate Zn(2+): cysteine 78, histidine 81, and cysteine 150.

The protein belongs to the GTP cyclohydrolase I family. As to quaternary structure, homomer.

The catalysed reaction is GTP + H2O = 7,8-dihydroneopterin 3'-triphosphate + formate + H(+). Its pathway is cofactor biosynthesis; 7,8-dihydroneopterin triphosphate biosynthesis; 7,8-dihydroneopterin triphosphate from GTP: step 1/1. The chain is GTP cyclohydrolase 1 from Bacillus anthracis (strain A0248).